A 339-amino-acid chain; its full sequence is Centromere protein N (339 aa).

Ser-226, Ser-235, and Ser-282 each carry phosphoserine.

It belongs to the CENP-N/CHL4 family. Component of the CENPA-NAC complex, at least composed of CENPA, CENPC, CENPH, CENPM, CENPN, CENPT and CENPU. The CENPA-NAC complex interacts with the CENPA-CAD complex, composed of CENPI, CENPK, CENPL, CENPO, CENPP, CENPQ, CENPR and CENPS. Interacts directly with CENPA. Identified in a centromere complex containing histones H2A, H2B and H4, and at least CENPA, CENPB, CENPC, CENPT, CENPN, HJURP, SUPT16H, SSRP1 and RSF1.

Its subcellular location is the nucleus. The protein resides in the chromosome. It localises to the centromere. It is found in the kinetochore. Functionally, component of the CENPA-NAC (nucleosome-associated) complex, a complex that plays a central role in assembly of kinetochore proteins, mitotic progression and chromosome segregation. The CENPA-NAC complex recruits the CENPA-CAD (nucleosome distal) complex and may be involved in incorporation of newly synthesized CENPA into centromeres. CENPN is the first protein to bind specifically to CENPA nucleosomes and the direct binding of CENPA nucleosomes by CENPN is required for centromere assembly. Required for chromosome congression and efficiently align the chromosomes on a metaphase plate. In Homo sapiens (Human), this protein is Centromere protein N (CENPN).